The primary structure comprises 1368 residues: Alpha-latrotoxin-Lg1a (1368 aa).

Residues 217-236 (VLYAILYGTQTYVSVMFFLL) are helix H8 is the probable transmembrane region of the tetrameric pore inserted in the target cell membrane. A disulfide bridge connects residues C392 and C1044. ANK repeat units lie at residues 469 to 500 (QGRT…DINQ), 504 to 533 (KGYT…SVNS), 538 to 568 (FLQT…NINE), 572 to 601 (DGFT…DVNV), 605 to 635 (KGLT…DINA), 639 to 669 (NNMT…NANA), 674 to 704 (GLLS…NYNL), 708 to 737 (GDIT…NINQ), 741 to 770 (EKYT…NLEA), 774 to 803 (TGAT…NWRE), 807 to 837 (NGQM…VLDI), 841 to 870 (NLDT…KVNT), 874 to 903 (KGQA…NVYI), 907 to 936 (DGLN…KFEW), 953 to 981 (ISHF…GHYS), 982 to 1011 (ICSP…SVDG), 1013 to 1042 (KPDT…KVNH), 1046 to 1075 (NGMT…DFRR), 1079 to 1109 (LDAT…NINI), and 1115 to 1144 (NKET…DENI). The interval 1174–1177 (KFRR) is furin-like endopeptidase recognition region. The propeptide occupies 1178-1368 (EYKSSNGEHD…GETLHLFHES (191 aa)).

The protein belongs to the cationic peptide 01 (latrotoxin) family. 03 (alpha-latrotoxin) subfamily. As to quaternary structure, homotetramer in membranes. Expressed in venom gland, cephalothorax, and abdomen tissues from both males and females.

It localises to the secreted. It is found in the target cell membrane. Its function is as follows. Presynaptic neurotoxin that causes massive release of neurotransmitters from vertebrate (but not invertebrate) nerve terminals and endocrine cells via a complex mechanism involving activation of receptor(s) and toxin insertion into the plasma membrane with subsequent pore formation. Binds to neurexin-1-alpha (NRXN1) in a calcium dependent manner, adhesion G protein-coupled receptor L1 (ADGRL1, also termed latrophilin-1 and calcium-independent receptor of latrotoxin (CIRL)), and receptor-type tyrosine-protein phosphatase S (PTPRS), also termed PTP sigma. NRXN1 and PTPRS are suggested to provide a platform for binding and subsequent pore formation events. In contrast, binding to ADGRL1 does not involve oligomerization and channel formation, but direct downstream stimulation of the synaptic fusion machinery. The chain is Alpha-latrotoxin-Lg1a from Latrodectus geometricus (Brown widow spider).